Consider the following 709-residue polypeptide: MADEPLLLNFVVDNAQSRKPEALKSSRRWTDRARDRKRQKRNSNESSKSTVKRNSGTNGASTDYKNSQKEKVINPVFDPRKPAHELKGNKRDNTFVTSLFTGDDSEHFSQDVGQNLEDNQISNIGTTKEASNAPIKTTNFAGVQLDTQLADHLNNKMNISAPTAIQSCCLPALLNTDDKDAFIEAQTGSGKTLAYLLPIVQRLIRLPKNLHTRTSGIYAVIMAPTRELCQQIYNVANKLNNNPLSHWIVSCNVIGGEKKKSEKARIRKGVNILIGTPGRLADHLENTEALDVSQVRWVVLDEGDRLMDMGFEETLTKILSYLESQSSIIKKDLSIPSRKVTMLCSATMKDTVKRLSDSALKDALYLKSSIVEETNDGYSQAPEQLLQRYVVVPPKLRLVSLVALLRSHVRSYKKIIIFLSCSDSVDFHFEAFRCAINADEMEEAVKEKPDSEGDIISNAPALRIDGKSNVYRLHGSLSQQIRTSTLNLFSSSEDSGSHILLCTDVAARGLDLPNVDLVVQYDAPFSTDDYLHRIGRTARAGHNGAAIMFLLPKESEYINLLKSSVSANILEQPNGPSGLLSAGFSQGKTNTNDWQDRATEWQLELERFILENEPMRNIAKRAFTSYVRAYATHLSSERSIFNMRDLHLGHIAKSFALREAPGKISGANSSKPRKQGGSVDKGKSKSSKDIAALMHRKAMEHYSTEHNIG.

The segment at 13-90 (DNAQSRKPEA…KPAHELKGNK (78 aa)) is disordered. The span at 16-34 (QSRKPEALKSSRRWTDRAR) shows a compositional bias: basic and acidic residues. The span at 44–65 (NESSKSTVKRNSGTNGASTDYK) shows a compositional bias: polar residues. Basic and acidic residues predominate over residues 66-90 (NSQKEKVINPVFDPRKPAHELKGNK). A Q motif motif is present at residues 138–167 (TNFAGVQLDTQLADHLNNKMNISAPTAIQS). Residues 172 to 366 (ALLNTDDKDA…DSALKDALYL (195 aa)) enclose the Helicase ATP-binding domain. 185-192 (AQTGSGKT) serves as a coordination point for ATP. A DEAD box motif is present at residues 301-304 (DEGD). The region spanning 404 to 580 (LLRSHVRSYK…EQPNGPSGLL (177 aa)) is the Helicase C-terminal domain. Positions 662 to 690 (GKISGANSSKPRKQGGSVDKGKSKSSKDI) are disordered.

Belongs to the DEAD box helicase family. DDX31/DBP7 subfamily.

Its subcellular location is the nucleus. It is found in the nucleolus. It catalyses the reaction ATP + H2O = ADP + phosphate + H(+). ATP-binding RNA helicase involved in the biogenesis of 60S ribosomal subunits and is required for the normal formation of 25S and 5.8S rRNAs. The protein is ATP-dependent RNA helicase dbp7 (dbp7) of Schizosaccharomyces pombe (strain 972 / ATCC 24843) (Fission yeast).